A 163-amino-acid polypeptide reads, in one-letter code: Phosphopantetheine adenylyltransferase (163 aa).

Thr11 provides a ligand contact to substrate. ATP-binding positions include 11-12 (TF) and His19. Residues Lys43, Leu75, and Arg89 each coordinate substrate. ATP-binding positions include 90 to 92 (GLR), Glu100, and 125 to 131 (YSFISST).

The protein belongs to the bacterial CoaD family. As to quaternary structure, homohexamer. The cofactor is Mg(2+).

It localises to the cytoplasm. The enzyme catalyses (R)-4'-phosphopantetheine + ATP + H(+) = 3'-dephospho-CoA + diphosphate. It functions in the pathway cofactor biosynthesis; coenzyme A biosynthesis; CoA from (R)-pantothenate: step 4/5. In terms of biological role, reversibly transfers an adenylyl group from ATP to 4'-phosphopantetheine, yielding dephospho-CoA (dPCoA) and pyrophosphate. This Acinetobacter baylyi (strain ATCC 33305 / BD413 / ADP1) protein is Phosphopantetheine adenylyltransferase.